We begin with the raw amino-acid sequence, 23 residues long: AGKARKQLSKNEDTKLKEQYIXD.

A disordered region spans residues 1–23 (AGKARKQLSKNEDTKLKEQYIXD). Residues 9–23 (SKNEDTKLKEQYIXD) are compositionally biased toward basic and acidic residues.

In Naegleria fowleri (Brain eating amoeba), this protein is Unknown protein NF005 from 2D-PAGE.